We begin with the raw amino-acid sequence, 155 residues long: Small ribosomal subunit protein uS7c (155 aa).

The protein belongs to the universal ribosomal protein uS7 family. In terms of assembly, part of the 30S ribosomal subunit.

It is found in the plastid. Its subcellular location is the chloroplast. One of the primary rRNA binding proteins, it binds directly to 16S rRNA where it nucleates assembly of the head domain of the 30S subunit. The sequence is that of Small ribosomal subunit protein uS7c (rps7) from Sagittaria latifolia (Broadleaf arrowhead).